A 367-amino-acid polypeptide reads, in one-letter code: tRNA-specific 2-thiouridylase MnmA (367 aa).

ATP is bound by residues alanine 7 to serine 14 and methionine 33. Cysteine 108 acts as the Nucleophile in catalysis. Cysteine 108 and cysteine 200 form a disulfide bridge. ATP is bound at residue glycine 132. The segment at lysine 150–glutamine 152 is interaction with tRNA. The Cysteine persulfide intermediate role is filled by cysteine 200. Residues arginine 301–tyrosine 302 are interaction with tRNA.

It belongs to the MnmA/TRMU family.

The protein localises to the cytoplasm. The enzyme catalyses S-sulfanyl-L-cysteinyl-[protein] + uridine(34) in tRNA + AH2 + ATP = 2-thiouridine(34) in tRNA + L-cysteinyl-[protein] + A + AMP + diphosphate + H(+). Catalyzes the 2-thiolation of uridine at the wobble position (U34) of tRNA, leading to the formation of s(2)U34. This is tRNA-specific 2-thiouridylase MnmA from Thermus thermophilus (strain ATCC BAA-163 / DSM 7039 / HB27).